Here is a 644-residue protein sequence, read N- to C-terminus: Protein FAM149B1 (644 aa).

Disordered regions lie at residues 392 to 490 (NQSD…NTLL), 551 to 575 (TFRS…RPGR), and 609 to 644 (GHFP…RPGL). Residues 395–404 (DCRDSEDKVS) show a composition bias toward basic and acidic residues. The span at 449 to 459 (PITSSVTQPIT) shows a compositional bias: polar residues. Positions 626–644 (QARSHNRGGSTARSSRPGL) are enriched in polar residues.

The protein belongs to the FAM149 family.

This is Protein FAM149B1 (fam149b1) from Danio rerio (Zebrafish).